The chain runs to 364 residues: tRNA N6-adenosine threonylcarbamoyltransferase (364 aa).

Fe cation-binding residues include H115 and H119. Substrate is bound by residues 137–141 (LVSGG), D170, G183, and N288. D316 contacts Fe cation.

It belongs to the KAE1 / TsaD family. The cofactor is Fe(2+).

It is found in the cytoplasm. The enzyme catalyses L-threonylcarbamoyladenylate + adenosine(37) in tRNA = N(6)-L-threonylcarbamoyladenosine(37) in tRNA + AMP + H(+). Required for the formation of a threonylcarbamoyl group on adenosine at position 37 (t(6)A37) in tRNAs that read codons beginning with adenine. Is involved in the transfer of the threonylcarbamoyl moiety of threonylcarbamoyl-AMP (TC-AMP) to the N6 group of A37, together with TsaE and TsaB. TsaD likely plays a direct catalytic role in this reaction. In Bartonella tribocorum (strain CIP 105476 / IBS 506), this protein is tRNA N6-adenosine threonylcarbamoyltransferase.